A 66-amino-acid chain; its full sequence is Large ribosomal subunit protein bL35 (66 aa).

Basic residues-rich tracts occupy residues 1-15 (MPKLKTKSGAKKRFK) and 27-40 (AGKRHGMIKRTKKQ). Residues 1–40 (MPKLKTKSGAKKRFKVTGTGKVMSAHAGKRHGMIKRTKKQ) form a disordered region.

This sequence belongs to the bacterial ribosomal protein bL35 family.

The chain is Large ribosomal subunit protein bL35 from Rhodopseudomonas palustris (strain BisA53).